Consider the following 103-residue polypeptide: NADH-quinone oxidoreductase subunit K 1 (103 aa).

A run of 3 helical transmembrane segments spans residues 7-27 (ISWF…GFLF), 31-51 (IITV…SFVT), and 63-83 (LFTF…LAII).

It belongs to the complex I subunit 4L family. In terms of assembly, NDH-1 is composed of 14 different subunits. Subunits NuoA, H, J, K, L, M, N constitute the membrane sector of the complex.

The protein localises to the cell inner membrane. It carries out the reaction a quinone + NADH + 5 H(+)(in) = a quinol + NAD(+) + 4 H(+)(out). In terms of biological role, NDH-1 shuttles electrons from NADH, via FMN and iron-sulfur (Fe-S) centers, to quinones in the respiratory chain. The immediate electron acceptor for the enzyme in this species is believed to be ubiquinone. Couples the redox reaction to proton translocation (for every two electrons transferred, four hydrogen ions are translocated across the cytoplasmic membrane), and thus conserves the redox energy in a proton gradient. The protein is NADH-quinone oxidoreductase subunit K 1 of Solibacter usitatus (strain Ellin6076).